The following is a 712-amino-acid chain: Polyribonucleotide nucleotidyltransferase (712 aa).

The Mg(2+) site is built by D487 and D493. Positions 554-613 (PRIEVMNIPVDKIREVIGSGGKVIREIVEKTGAKINIEDDGTVKIASSSGKEIEAARKWI) constitute a KH domain. In terms of domain architecture, S1 motif spans 623–691 (GQVYEGTVVK…ERGKVRLSMK (69 aa)).

The protein belongs to the polyribonucleotide nucleotidyltransferase family. It depends on Mg(2+) as a cofactor.

It localises to the cytoplasm. It catalyses the reaction RNA(n+1) + phosphate = RNA(n) + a ribonucleoside 5'-diphosphate. Functionally, involved in mRNA degradation. Catalyzes the phosphorolysis of single-stranded polyribonucleotides processively in the 3'- to 5'-direction. The protein is Polyribonucleotide nucleotidyltransferase of Rhizobium johnstonii (strain DSM 114642 / LMG 32736 / 3841) (Rhizobium leguminosarum bv. viciae).